A 508-amino-acid chain; its full sequence is Probable ATP-dependent RNA helicase ddx49 (508 aa).

Positions 4-32 match the Q motif motif; the sequence is KTFEELGLTTWLVANCKQLGFKAPSNIQA. Residues 35-208 form the Helicase ATP-binding domain; the sequence is IPEILKGRDI…SIALNKPFIF (174 aa). 48–55 serves as a coordination point for ATP; that stretch reads AKTGSGKT. Positions 154 to 157 match the DEAD box motif; the sequence is DEAD. The Helicase C-terminal domain maps to 219–379; that stretch reads TLKQEYIYMP…LYKTDDDEVF (161 aa). Positions 422–476 are disordered; the sequence is VNNKEKFENNNNDNNNNNKTKTTKPENKKEITKIQEQPSKSTTTTKSIEKKPTTI. The segment covering 430–441 has biased composition (low complexity); the sequence is NNNNDNNNNNKT. Residues 444 to 454 show a composition bias toward basic and acidic residues; sequence TKPENKKEITK.

The protein belongs to the DEAD box helicase family. DDX49/DBP8 subfamily.

The catalysed reaction is ATP + H2O = ADP + phosphate + H(+). Probable ATP-binding RNA helicase. The protein is Probable ATP-dependent RNA helicase ddx49 (ddx49) of Dictyostelium discoideum (Social amoeba).